A 112-amino-acid polypeptide reads, in one-letter code: Protein FAM32A (112 aa).

The interval 23–58 (TKRKKKKKDKDKAKLLEAMGTSKKNEEEKRRGLDKR) is disordered. Residues 45-58 (KKNEEEKRRGLDKR) show a composition bias toward basic and acidic residues.

This sequence belongs to the FAM32 family.

The protein localises to the nucleus. Functionally, may induce G2 arrest and apoptosis. May also increase cell sensitivity to apoptotic stimuli. This Bos taurus (Bovine) protein is Protein FAM32A (FAM32A).